The sequence spans 166 residues: uncharacterized protein (166 aa).

This is an uncharacterized protein from Invertebrate iridescent virus 6 (IIV-6).